A 235-amino-acid chain; its full sequence is Aspartate/glutamate leucyltransferase (235 aa).

This sequence belongs to the R-transferase family. Bpt subfamily.

It is found in the cytoplasm. The catalysed reaction is N-terminal L-glutamyl-[protein] + L-leucyl-tRNA(Leu) = N-terminal L-leucyl-L-glutamyl-[protein] + tRNA(Leu) + H(+). The enzyme catalyses N-terminal L-aspartyl-[protein] + L-leucyl-tRNA(Leu) = N-terminal L-leucyl-L-aspartyl-[protein] + tRNA(Leu) + H(+). Functions in the N-end rule pathway of protein degradation where it conjugates Leu from its aminoacyl-tRNA to the N-termini of proteins containing an N-terminal aspartate or glutamate. In Pseudomonas fluorescens (strain SBW25), this protein is Aspartate/glutamate leucyltransferase.